Reading from the N-terminus, the 915-residue chain is Kinesin-like protein KIN-10A (915 aa).

The span at 1-16 (MAPPTPSPRPGPPPTP) shows a compositional bias: pro residues. 2 disordered regions span residues 1–28 (MAPPTPSPRPGPPPTPQAAMTTPLKTPA) and 34–53 (HFPAMTPRNGGGGGAAAGGT). The Kinesin motor domain maps to 56–391 (PVEVIGRIRN…LEYGAKAKCI (336 aa)). 137 to 144 (GPTGSGKS) contacts ATP. Residues 426–517 (NLQKENKLRE…QRLKEVEREK (92 aa)) are a coiled coil. The interval 676–718 (PAKKAFGDENNEPAKQTFGDENKQQPAKRVFGDENKDPSAWGA) is disordered.

It belongs to the TRAFAC class myosin-kinesin ATPase superfamily. Kinesin family. KIN-10 subfamily.

The chain is Kinesin-like protein KIN-10A from Oryza sativa subsp. japonica (Rice).